Here is a 101-residue protein sequence, read N- to C-terminus: Protein Tat (101 aa).

The tract at residues 1-20 (MEVVDPNLDPWKHPGSQPET) is disordered. Residues 1–24 (MEVVDPNLDPWKHPGSQPETPCNK) form an interaction with human CREBBP region. Positions 1–48 (MEVVDPNLDPWKHPGSQPETPCNKCYCKKCCFHCQLCFTRKGLGISYG) are transactivation. Zn(2+) contacts are provided by Cys22, Cys25, and Cys27. A cysteine-rich region spans residues 22–37 (CNKCYCKKCCFHCQLC). Lys28 is subject to N6-acetyllysine; by host PCAF. The Zn(2+) site is built by Cys30, His33, Cys34, and Cys37. A core region spans residues 38-48 (FTRKGLGISYG). Residues 47–101 (YGRKKRRQRRRTPQSGEVHQDPVSKQPLSQTRGDPKGPEESKKKVESKTKTDPSD) are disordered. The span at 48-58 (GRKKRRQRRRT) shows a compositional bias: basic residues. Residues 49–57 (RKKRRQRRR) carry the Nuclear localization signal, RNA-binding (TAR), and protein transduction motif. The tract at residues 49 to 86 (RKKRRQRRRTPQSGEVHQDPVSKQPLSQTRGDPKGPEE) is interaction with the host capping enzyme RNGTT. An N6-acetyllysine; by host EP300 and GCN5L2 mark is found at Lys50 and Lys51. Residues Arg52 and Arg53 each carry the asymmetric dimethylarginine; by host PRMT6 modification. A Glycyl lysine isopeptide (Lys-Gly) (interchain with G-Cter in ubiquitin) cross-link involves residue Lys71. A Cell attachment site motif is present at residues 78–80 (RGD). Residues 79 to 101 (GDPKGPEESKKKVESKTKTDPSD) show a composition bias toward basic and acidic residues.

Belongs to the lentiviruses Tat family. In terms of assembly, interacts with host CCNT1. Associates with the P-TEFb complex composed at least of Tat, P-TEFb (CDK9 and CCNT1), TAR RNA, RNA Pol II. Recruits the HATs CREBBP, TAF1/TFIID, EP300, PCAF and GCN5L2. Interacts with host KAT5/Tip60; this interaction targets the latter to degradation. Interacts with the host deacetylase SIRT1. Interacts with host capping enzyme RNGTT; this interaction stimulates RNGTT. Binds to host KDR, and to the host integrins ITGAV/ITGB3 and ITGA5/ITGB1. Interacts with host KPNB1/importin beta-1 without previous binding to KPNA1/importin alpha-1. Interacts with EIF2AK2. Interacts with host nucleosome assembly protein NAP1L1; this interaction may be required for the transport of Tat within the nucleus, since the two proteins interact at the nuclear rim. Interacts with host C1QBP/SF2P32; this interaction involves lysine-acetylated Tat. Interacts with the host chemokine receptors CCR2, CCR3 and CXCR4. Interacts with host DPP4/CD26; this interaction may trigger an anti-proliferative effect. Interacts with host LDLR. Interacts with the host extracellular matrix metalloproteinase MMP1. Interacts with host PRMT6; this interaction mediates Tat's methylation. Interacts with, and is ubiquitinated by MDM2/Hdm2. Interacts with host PSMC3 and HTATIP2. Interacts with STAB1; this interaction may overcome SATB1-mediated repression of IL2 and IL2RA (interleukin) in T cells by binding to the same domain than HDAC1. Interacts (when acetylated) with human CDK13, thereby increasing HIV-1 mRNA splicing and promoting the production of the doubly spliced HIV-1 protein Nef. Interacts with host TBP; this interaction modulates the activity of transcriptional pre-initiation complex. Interacts with host RELA. Interacts with host PLSCR1; this interaction negatively regulates Tat transactivation activity by altering its subcellular distribution. In terms of processing, asymmetrical arginine methylation by host PRMT6 seems to diminish the transactivation capacity of Tat and affects the interaction with host CCNT1. Acetylation by EP300, CREBBP, GCN5L2/GCN5 and PCAF regulates the transactivation activity of Tat. EP300-mediated acetylation of Lys-50 promotes dissociation of Tat from the TAR RNA through the competitive binding to PCAF's bromodomain. In addition, the non-acetylated Tat's N-terminus can also interact with PCAF. PCAF-mediated acetylation of Lys-28 enhances Tat's binding to CCNT1. Lys-50 is deacetylated by SIRT1. Post-translationally, polyubiquitination by host MDM2 does not target Tat to degradation, but activates its transactivation function and fosters interaction with CCNT1 and TAR RNA. In terms of processing, phosphorylated by EIF2AK2 on serine and threonine residues adjacent to the basic region important for TAR RNA binding and function. Phosphorylation of Tat by EIF2AK2 is dependent on the prior activation of EIF2AK2 by dsRNA.

Its subcellular location is the host nucleus. The protein localises to the host nucleolus. It is found in the host cytoplasm. It localises to the secreted. Transcriptional activator that increases RNA Pol II processivity, thereby increasing the level of full-length viral transcripts. Recognizes a hairpin structure at the 5'-LTR of the nascent viral mRNAs referred to as the transactivation responsive RNA element (TAR) and recruits the cyclin T1-CDK9 complex (P-TEFb complex) that will in turn hyperphosphorylate the RNA polymerase II to allow efficient elongation. The CDK9 component of P-TEFb and other Tat-activated kinases hyperphosphorylate the C-terminus of RNA Pol II that becomes stabilized and much more processive. Other factors such as HTATSF1/Tat-SF1, SUPT5H/SPT5, and HTATIP2 are also important for Tat's function. Besides its effect on RNA Pol II processivity, Tat induces chromatin remodeling of proviral genes by recruiting the histone acetyltransferases (HATs) CREBBP, EP300 and PCAF to the chromatin. This also contributes to the increase in proviral transcription rate, especially when the provirus integrates in transcriptionally silent region of the host genome. To ensure maximal activation of the LTR, Tat mediates nuclear translocation of NF-kappa-B by interacting with host RELA. Through its interaction with host TBP, Tat may also modulate transcription initiation. Tat can reactivate a latently infected cell by penetrating in it and transactivating its LTR promoter. In the cytoplasm, Tat is thought to act as a translational activator of HIV-1 mRNAs. Its function is as follows. Extracellular circulating Tat can be endocytosed by surrounding uninfected cells via the binding to several surface receptors such as CD26, CXCR4, heparan sulfate proteoglycans (HSPG) or LDLR. Neurons are rarely infected, but they internalize Tat via their LDLR. Through its interaction with nuclear HATs, Tat is potentially able to control the acetylation-dependent cellular gene expression. Modulates the expression of many cellular genes involved in cell survival, proliferation or in coding for cytokines or cytokine receptors. Tat plays a role in T-cell and neurons apoptosis. Tat induced neurotoxicity and apoptosis probably contribute to neuroAIDS. Circulating Tat also acts as a chemokine-like and/or growth factor-like molecule that binds to specific receptors on the surface of the cells, affecting many cellular pathways. In the vascular system, Tat binds to ITGAV/ITGB3 and ITGA5/ITGB1 integrins dimers at the surface of endothelial cells and competes with bFGF for heparin-binding sites, leading to an excess of soluble bFGF. In Homo sapiens (Human), this protein is Protein Tat.